The sequence spans 496 residues: Lysine--tRNA ligase (496 aa).

Mg(2+) is bound by residues glutamate 409 and glutamate 416.

It belongs to the class-II aminoacyl-tRNA synthetase family. As to quaternary structure, homodimer. Requires Mg(2+) as cofactor.

It localises to the cytoplasm. The catalysed reaction is tRNA(Lys) + L-lysine + ATP = L-lysyl-tRNA(Lys) + AMP + diphosphate. This is Lysine--tRNA ligase from Streptococcus mutans serotype c (strain ATCC 700610 / UA159).